The following is a 637-amino-acid chain: DEAD-box ATP-dependent RNA helicase 37 (637 aa).

Disordered stretches follow at residues 1 to 68 (MRSS…QPSA) and 86 to 141 (GPAS…EEAT). Composition is skewed to low complexity over residues 10–28 (ANAEESAPATGAAPTPVAN) and 46–68 (GQAPTTTAAPAPAPGPAAVQPSA). Gly residues predominate over residues 104 to 116 (GGRGGGGGGGGGW). The Q motif motif lies at 174–202 (NTFAEIDLGDALNENIRRCKYVKPTPVQR). The region spanning 205–389 (IPISIAGRDL…SDFLADYIFL (185 aa)) is the Helicase ATP-binding domain. 218–225 (AQTGSGKT) provides a ligand contact to ATP. Positions 333-336 (DEAD) match the DEAD box motif. The region spanning 416-567 (YLMDLLHAQK…EVPQWLERYS (152 aa)) is the Helicase C-terminal domain. Residues 570 to 610 (SSFGGGGGRNRRSGGARFGGRDFRRDNRGGGGGGYGGGGGG) form a disordered region. Basic and acidic residues predominate over residues 588-597 (GGRDFRRDNR). Positions 598 to 610 (GGGGGGYGGGGGG) are enriched in gly residues.

The protein belongs to the DEAD box helicase family. DDX3/DED1 subfamily.

The catalysed reaction is ATP + H2O = ADP + phosphate + H(+). The protein is DEAD-box ATP-dependent RNA helicase 37 (PL10A) of Oryza sativa subsp. japonica (Rice).